The following is a 220-amino-acid chain: NAD(P)H-hydrate epimerase (220 aa).

The 198-residue stretch at 6–203 (ARHLTTLATG…SFDLPEALFH (198 aa)) folds into the YjeF N-terminal domain. 53 to 57 (HNGGV) is a binding site for (6S)-NADPHX. Asn54 and Asp116 together coordinate K(+). (6S)-NADPHX is bound by residues 120–126 (GMRLEGP) and Asp149. Residue Thr152 coordinates K(+).

Belongs to the NnrE/AIBP family. The cofactor is K(+).

It carries out the reaction (6R)-NADHX = (6S)-NADHX. The catalysed reaction is (6R)-NADPHX = (6S)-NADPHX. Catalyzes the epimerization of the S- and R-forms of NAD(P)HX, a damaged form of NAD(P)H that is a result of enzymatic or heat-dependent hydration. This is a prerequisite for the S-specific NAD(P)H-hydrate dehydratase to allow the repair of both epimers of NAD(P)HX. The protein is NAD(P)H-hydrate epimerase of Truepera radiovictrix (strain DSM 17093 / CIP 108686 / LMG 22925 / RQ-24).